A 349-amino-acid polypeptide reads, in one-letter code: MASGIQPDAGQILNSLINSVLVVDDALAIHYANPAAQQLLAQSSRKLFGTPLPELLSYFSLNIDLMRESLAAGQGFTDNEVTLVIDSRSHILSLTAQRLPDDFILLEMAPMDNQRRLSQEQLQHAQQIAARDLVRGLAHEIKNPLGGLRGAAQLLSKALPDPALTEYTKVIIEQADRLRNLVDRLLGPQHPGMHITESIHKVAERVVALVSMELPDNVRLIRDYDPSLPELPHDPEQIEQVLLNIVRNALQALGPEGGEITLRTRTAFQLTLHGERYRLAARIDVEDNGPGIPPHLQDTLFYPMVSGREGGTGLGLSIARNLIDQHAGKIEFTSWPGHTEFSVYLPIRK.

The PAS domain occupies 5–78 (IQPDAGQILN…SLAAGQGFTD (74 aa)). In terms of domain architecture, Histidine kinase spans 136-349 (GLAHEIKNPL…EFSVYLPIRK (214 aa)). H139 carries the post-translational modification Phosphohistidine; by autocatalysis. Residue K329 coordinates ATP.

In terms of processing, autophosphorylated.

The protein resides in the cytoplasm. The enzyme catalyses ATP + protein L-histidine = ADP + protein N-phospho-L-histidine.. Its function is as follows. Member of the two-component regulatory system NtrB/NtrC, which controls expression of the nitrogen-regulated (ntr) genes in response to nitrogen limitation. Under conditions of nitrogen limitation, NtrB autophosphorylates and transfers the phosphoryl group to NtrC. In the presence of nitrogen, acts as a phosphatase that dephosphorylates and inactivates NtrC. In Salmonella typhi, this protein is Sensory histidine kinase/phosphatase NtrB (glnL).